Here is a 515-residue protein sequence, read N- to C-terminus: Probable multifunctional siroheme biosynthesis protein HemA (515 aa).

NAD(+) is bound by residues 26–27 (SL) and 47–48 (IR). Residues 26–174 (SLDYKSAAID…TAAKKAKTEI (149 aa)) form a glutamyl-tRNA reductase region. L-glutamyl-tRNA(Glu) is bound by residues 68–71 (TCNR), serine 127, glutamate 132, and glutamine 138. Residue cysteine 69 is the Nucleophile of the active site. NADP(+) is bound at residue 206 to 211 (GNGEIG). The precorrin-2 dehydrogenase /sirohydrochlorin ferrochelatase stretch occupies residues 367–507 (FPLFIDLSGK…SLVKSVAEQI (141 aa)).

This sequence in the N-terminal section; belongs to the glutamyl-tRNA reductase family. In the C-terminal section; belongs to the precorrin-2 dehydrogenase / sirohydrochlorin ferrochelatase family. As to quaternary structure, homodimer.

The enzyme catalyses (S)-4-amino-5-oxopentanoate + tRNA(Glu) + NADP(+) = L-glutamyl-tRNA(Glu) + NADPH + H(+). The catalysed reaction is precorrin-2 + NAD(+) = sirohydrochlorin + NADH + 2 H(+). It catalyses the reaction siroheme + 2 H(+) = sirohydrochlorin + Fe(2+). It participates in cofactor biosynthesis; adenosylcobalamin biosynthesis; sirohydrochlorin from precorrin-2: step 1/1. Its pathway is porphyrin-containing compound metabolism; siroheme biosynthesis; siroheme from sirohydrochlorin: step 1/1. It functions in the pathway porphyrin-containing compound metabolism; siroheme biosynthesis; sirohydrochlorin from precorrin-2: step 1/1. The protein operates within porphyrin-containing compound metabolism; protoporphyrin-IX biosynthesis; 5-aminolevulinate from L-glutamyl-tRNA(Glu): step 1/2. Functionally, multifunctional enzyme that catalyzes the NADPH-dependent reduction of glutamyl-tRNA(Glu) to glutamate 1-semialdehyde (GSA), the NAD-dependent ring dehydrogenation of precorrin-2 to sirohydrochlorin and finally, the ferrochelation of sirohydrochlorin to yield siroheme. The chain is Probable multifunctional siroheme biosynthesis protein HemA from Ruminiclostridium josui (Clostridium josui).